We begin with the raw amino-acid sequence, 85 residues long: UPF0335 protein Oant_1161 (85 aa).

This sequence belongs to the UPF0335 family.

The polypeptide is UPF0335 protein Oant_1161 (Brucella anthropi (strain ATCC 49188 / DSM 6882 / CCUG 24695 / JCM 21032 / LMG 3331 / NBRC 15819 / NCTC 12168 / Alc 37) (Ochrobactrum anthropi)).